The sequence spans 89 residues: Probable oxaloacetate decarboxylase gamma chain (89 aa).

A helical transmembrane segment spans residues 13 to 33 (LMLSGMGFVITFLLILIWAIT).

It belongs to the OadG family. Heterotrimer of an alpha, a beta and a gamma subunit. The cofactor is Na(+).

It localises to the cell membrane. The enzyme catalyses oxaloacetate + 2 Na(+)(in) + H(+) = pyruvate + 2 Na(+)(out) + CO2. Functionally, catalyzes the decarboxylation of oxaloacetate coupled to Na(+) translocation. This chain is Probable oxaloacetate decarboxylase gamma chain, found in Actinobacillus succinogenes (strain ATCC 55618 / DSM 22257 / CCUG 43843 / 130Z).